The primary structure comprises 60 residues: Large ribosomal subunit protein bL32 (60 aa).

The interval 1–60 (MAVQQVKKSRSKRDIRRSHDSLTNPTLSTDKSTGELHLRHHVSPNGFYKGRKVVDTKSED) is disordered. The segment covering 7 to 16 (KKSRSKRDIR) has biased composition (basic residues). Residues 22–31 (LTNPTLSTDK) are compositionally biased toward polar residues.

This sequence belongs to the bacterial ribosomal protein bL32 family.

This chain is Large ribosomal subunit protein bL32, found in Francisella tularensis subsp. tularensis (strain SCHU S4 / Schu 4).